The chain runs to 439 residues: Signal recognition particle 54 kDa protein (439 aa).

GTP is bound by residues glycine 104 to threonine 111, aspartate 184 to arginine 188, and serine 242 to aspartate 245.

This sequence belongs to the GTP-binding SRP family. SRP54 subfamily. As to quaternary structure, part of the signal recognition particle protein translocation system, which is composed of SRP and FtsY. Archaeal SRP consists of a 7S RNA molecule of 300 nucleotides and two protein subunits: SRP54 and SRP19.

It is found in the cytoplasm. It catalyses the reaction GTP + H2O = GDP + phosphate + H(+). In terms of biological role, involved in targeting and insertion of nascent membrane proteins into the cytoplasmic membrane. Binds to the hydrophobic signal sequence of the ribosome-nascent chain (RNC) as it emerges from the ribosomes. The SRP-RNC complex is then targeted to the cytoplasmic membrane where it interacts with the SRP receptor FtsY. This chain is Signal recognition particle 54 kDa protein, found in Methanococcoides burtonii (strain DSM 6242 / NBRC 107633 / OCM 468 / ACE-M).